A 348-amino-acid chain; its full sequence is Histidinol-phosphate aminotransferase (348 aa).

An N6-(pyridoxal phosphate)lysine modification is found at lysine 207.

This sequence belongs to the class-II pyridoxal-phosphate-dependent aminotransferase family. Histidinol-phosphate aminotransferase subfamily. Homodimer. Pyridoxal 5'-phosphate serves as cofactor.

It carries out the reaction L-histidinol phosphate + 2-oxoglutarate = 3-(imidazol-4-yl)-2-oxopropyl phosphate + L-glutamate. It functions in the pathway amino-acid biosynthesis; L-histidine biosynthesis; L-histidine from 5-phospho-alpha-D-ribose 1-diphosphate: step 7/9. In Rippkaea orientalis (strain PCC 8801 / RF-1) (Cyanothece sp. (strain PCC 8801)), this protein is Histidinol-phosphate aminotransferase.